The following is a 120-amino-acid chain: Large-conductance mechanosensitive channel (120 aa).

2 helical membrane-spanning segments follow: residues 7 to 27 (EFALKGNVLDLAIAVVMGAAF) and 64 to 84 (GLFIQSVIDFIIIAFALFIFV).

The protein belongs to the MscL family. Homopentamer.

The protein resides in the cell membrane. Its function is as follows. Channel that opens in response to stretch forces in the membrane lipid bilayer. May participate in the regulation of osmotic pressure changes within the cell. This Staphylococcus aureus (strain Mu3 / ATCC 700698) protein is Large-conductance mechanosensitive channel.